Consider the following 320-residue polypeptide: Heterogeneous nuclear ribonucleoprotein A1 (320 aa).

An N-acetylmethionine modification is found at methionine 1. N-acetylserine; in Heterogeneous nuclear ribonucleoprotein A1, N-terminally processed is present on serine 2. Serine 2 carries the phosphoserine modification. Position 3 is an N6-acetyllysine; alternate (lysine 3). Lysine 3 participates in a covalent cross-link: Glycyl lysine isopeptide (Lys-Gly) (interchain with G-Cter in SUMO2); alternate. 2 positions are modified to phosphoserine: serine 4 and serine 6. Residues 4 to 94 form a globular A domain region; it reads SESPKEPEQL…EPKRAVSRED (91 aa). A Glycyl lysine isopeptide (Lys-Gly) (interchain with G-Cter in SUMO2) cross-link involves residue lysine 8. RRM domains are found at residues 14 to 97 and 105 to 184; these read RKLF…DSQR and KKIF…LSKQ. Serine 22 carries the phosphoserine modification. Residue lysine 78 forms a Glycyl lysine isopeptide (Lys-Gly) (interchain with G-Cter in SUMO2) linkage. Residues 95–185 are globular B domain; it reads SQRPGAHLTV…EVRKALSKQE (91 aa). Lysine 113 participates in a covalent cross-link: Glycyl lysine isopeptide (Lys-Gly) (interchain with G-Cter in SUMO). Residues lysine 179 and lysine 183 each participate in a glycyl lysine isopeptide (Lys-Gly) (interchain with G-Cter in SUMO2) cross-link. The segment at 182-216 is disordered; it reads SKQEMASASSSQRGRSGSGNFGGGRGGGFGGNDNF. Phosphoserine; by MKNK2 is present on serine 192. Arginine 194 is modified (asymmetric dimethylarginine; alternate). Arginine 194 bears the Dimethylated arginine; alternate mark. Arginine 194 is modified (omega-N-methylarginine; alternate). Residues 197 to 216 are compositionally biased toward gly residues; sequence SGSGNFGGGRGGGFGGNDNF. Serine 199 carries the post-translational modification Phosphoserine. Asymmetric dimethylarginine; alternate occurs at positions 206, 218, 225, and 232. Arginine 206 bears the Dimethylated arginine; alternate mark. Omega-N-methylarginine; alternate is present on residues arginine 206, arginine 218, arginine 225, and arginine 232. Residues 218 to 240 form an RNA-binding RGG-box region; it reads RGGNFSGRGGFGGSRGGGGYGGS. Arginine 225 carries the post-translational modification Dimethylated arginine; alternate. Residues 268–305 are nuclear targeting sequence; sequence NQSSNFGPMKGGNFGGRSSGPYGGGGQYFAKPRNQGGY. Positions 274–320 are disordered; it reads GPMKGGNFGGRSSGPYGGGGQYFAKPRNQGGYGGSSSSSSYGSGRRF. Residues 276 to 294 are compositionally biased toward gly residues; that stretch reads MKGGNFGGRSSGPYGGGGQ. Arginine 284 carries the omega-N-methylarginine modification. A Phosphoserine modification is found at serine 285. The residue at position 298 (lysine 298) is an N6-acetyllysine; alternate. A Glycyl lysine isopeptide (Lys-Gly) (interchain with G-Cter in SUMO2); alternate cross-link involves residue lysine 298. An Omega-N-methylarginine modification is found at arginine 300. Residues 308–320 show a composition bias toward low complexity; that stretch reads SSSSSSYGSGRRF. Position 309 is a phosphoserine (serine 309). Phosphoserine; by MKNK2 occurs at positions 310, 311, and 312. Phosphoserine is present on residues serine 313 and serine 316. Position 318 is an omega-N-methylarginine (arginine 318).

Identified in the spliceosome C complex. Identified in a IGF2BP1-dependent mRNP granule complex containing untranslated mRNAs. Interacts with SEPT6. Interacts with C9orf72. Interacts with KHDRBS1. Interacts with UBQLN2. Interacts with PPIA/CYPA. Post-translationally, sumoylated.

It is found in the nucleus. The protein resides in the cytoplasm. Its function is as follows. Involved in the packaging of pre-mRNA into hnRNP particles, transport of poly(A) mRNA from the nucleus to the cytoplasm and modulation of splice site selection. Plays a role in the splicing of pyruvate kinase PKM by binding repressively to sequences flanking PKM exon 9, inhibiting exon 9 inclusion and resulting in exon 10 inclusion and production of the PKM M2 isoform. Binds to the IRES and thereby inhibits the translation of the apoptosis protease activating factor APAF1. May bind to specific miRNA hairpins. The protein is Heterogeneous nuclear ribonucleoprotein A1 (Hnrnpa1) of Mus musculus (Mouse).